The chain runs to 474 residues: Mitochondrial import inner membrane translocase subunit TIM44-1 (474 aa).

Residues 1-54 (MAIRKIIRDLLITKQPLLRQLFHQRVLRANARSEFLPAIGYTSHRRFSVFTEFS) constitute a mitochondrion transit peptide. Positions 68–88 (ERTVKELKERTEEFKGVTEDL) form a coiled coil. Residues 132 to 143 (VKESFKLGKEEN) show a composition bias toward basic and acidic residues. The tract at residues 132-165 (VKESFKLGKEENAESASSSGTRASQGEKQQSGST) is disordered. A compositionally biased stretch (polar residues) spans 145-165 (ESASSSGTRASQGEKQQSGST).

The protein belongs to the Tim44 family. Probable component of the PAM complex at least composed of a mitochondrial HSP70 protein, TIMM44 and TIMM14. The complex interacts with the TIMM23 component of the TIM17:23 complex. Expressed in roots, flowers, young cotyledons and leaves.

Its subcellular location is the mitochondrion inner membrane. In terms of biological role, essential component of the PAM complex, a complex required for the translocation of transit peptide-containing proteins from the inner membrane into the mitochondrial matrix in an ATP-dependent manner. Recruits mitochondrial HSP70 to drive protein translocation into the matrix using ATP as an energy source. This Arabidopsis thaliana (Mouse-ear cress) protein is Mitochondrial import inner membrane translocase subunit TIM44-1 (TIM44-1).